Here is a 382-residue protein sequence, read N- to C-terminus: Opsin Rh5 (382 aa).

At 1–49 the chain is on the extracellular side; that stretch reads MHINGPSGPQAYVNDSLGDGSVFPMGHGYPAEYQHMVHAHWRGFREAPI. Asparagine 14 carries N-linked (GlcNAc...) asparagine glycosylation. The chain crosses the membrane as a helical span at residues 50–76; it reads YYHAGFYIAFIVLMLSSIFGNGLVIWI. The Cytoplasmic segment spans residues 77–88; that stretch reads FSTSKSLRTPSN. Residues 89-112 traverse the membrane as a helical segment; sequence LLILNLAIFDLFMCTNMPHYLINA. Over 113 to 127 the chain is Extracellular; the sequence is TVGYIVGGDLGCDIY. Cysteine 124 and cysteine 201 are disulfide-bonded. Residues 128-147 traverse the membrane as a helical segment; the sequence is ALNGGISGMGASITNAFIAF. Over 148–165 the chain is Cytoplasmic; it reads DRYKTISNPIDGRLSYGQ. A helical membrane pass occupies residues 166-190; it reads IVLLILFTWLWATPFSVLPLFQIWG. Residues 191-214 are Extracellular-facing; sequence RYQPEGFLTTCSFDYLTNTDENRL. Residues 215-242 form a helical membrane-spanning segment; that stretch reads FVRTIFVWSYVIPMTMILVSYYKLFTHV. Over 243-278 the chain is Cytoplasmic; that stretch reads RVHEKMLAEQAKKMNVKSLSANANADNMSVELRIAK. Residues 279 to 302 traverse the membrane as a helical segment; sequence AALIIYMLFILAWTPYSVVALIGC. At 303 to 310 the chain is on the extracellular side; sequence FGEQQLIT. A helical membrane pass occupies residues 311–335; the sequence is PFVSMLPCLACKSVSCLDPWVYATS. Lysine 322 bears the N6-(retinylidene)lysine mark. Residues 336–382 lie on the Cytoplasmic side of the membrane; that stretch reads HPKYRLELERRLPWLGIREKHATSGTSGGQESVASVSGDTLALSVQN. A disordered region spans residues 357–382; the sequence is ATSGTSGGQESVASVSGDTLALSVQN. The segment covering 358 to 382 has biased composition (polar residues); that stretch reads TSGTSGGQESVASVSGDTLALSVQN.

This sequence belongs to the G-protein coupled receptor 1 family. Opsin subfamily. Phosphorylated on some or all of the serine and threonine residues present in the C-terminal region. Expressed specifically in the retina. Each Drosophila eye is composed of 800 facets or ommatidia. Each ommatidium contains 8 photoreceptor cells (R1-R8), the R1 to R6 cells are outer cells, while R7 and R8 are inner cells. Rh5 is expressed only in R8 photoreceptor cells in a subset of ommatidia.

Its subcellular location is the cell projection. The protein resides in the rhabdomere membrane. Its function is as follows. Visual pigments are the light-absorbing molecules that mediate vision. They consist of an apoprotein, opsin, covalently linked to cis-retinal. The polypeptide is Opsin Rh5 (Rh5) (Drosophila melanogaster (Fruit fly)).